The chain runs to 181 residues: uncharacterized protein (181 aa).

This is an uncharacterized protein from Acheta domesticus (House cricket).